Here is a 200-residue protein sequence, read N- to C-terminus: Pyrrolidone-carboxylate peptidase (200 aa).

Active-site residues include glutamate 78, cysteine 141, and histidine 165.

Belongs to the peptidase C15 family. As to quaternary structure, homotetramer.

It is found in the cytoplasm. It catalyses the reaction Release of an N-terminal pyroglutamyl group from a polypeptide, the second amino acid generally not being Pro.. Removes 5-oxoproline from various penultimate amino acid residues except L-proline. This chain is Pyrrolidone-carboxylate peptidase, found in Thermococcus onnurineus (strain NA1).